The following is a 521-amino-acid chain: Glutamate--cysteine ligase (521 aa).

Belongs to the glutamate--cysteine ligase type 1 family. Type 1 subfamily.

It carries out the reaction L-cysteine + L-glutamate + ATP = gamma-L-glutamyl-L-cysteine + ADP + phosphate + H(+). Its pathway is sulfur metabolism; glutathione biosynthesis; glutathione from L-cysteine and L-glutamate: step 1/2. The sequence is that of Glutamate--cysteine ligase from Aliivibrio fischeri (strain MJ11) (Vibrio fischeri).